Reading from the N-terminus, the 275-residue chain is 3-methyl-2-oxobutanoate hydroxymethyltransferase (275 aa).

Aspartate 49 and aspartate 88 together coordinate Mg(2+). 3-methyl-2-oxobutanoate is bound by residues 49 to 50, aspartate 88, and lysine 118; that span reads DS. A Mg(2+)-binding site is contributed by glutamate 120. Glutamate 187 serves as the catalytic Proton acceptor.

The protein belongs to the PanB family. Homodecamer; pentamer of dimers. Requires Mg(2+) as cofactor.

The protein resides in the cytoplasm. It carries out the reaction 3-methyl-2-oxobutanoate + (6R)-5,10-methylene-5,6,7,8-tetrahydrofolate + H2O = 2-dehydropantoate + (6S)-5,6,7,8-tetrahydrofolate. It functions in the pathway cofactor biosynthesis; (R)-pantothenate biosynthesis; (R)-pantoate from 3-methyl-2-oxobutanoate: step 1/2. Catalyzes the reversible reaction in which hydroxymethyl group from 5,10-methylenetetrahydrofolate is transferred onto alpha-ketoisovalerate to form ketopantoate. The polypeptide is 3-methyl-2-oxobutanoate hydroxymethyltransferase (Brucella melitensis biotype 1 (strain ATCC 23456 / CCUG 17765 / NCTC 10094 / 16M)).